The primary structure comprises 688 residues: Glycine--tRNA ligase beta subunit (688 aa).

Belongs to the class-II aminoacyl-tRNA synthetase family. In terms of assembly, tetramer of two alpha and two beta subunits.

It localises to the cytoplasm. It carries out the reaction tRNA(Gly) + glycine + ATP = glycyl-tRNA(Gly) + AMP + diphosphate. The polypeptide is Glycine--tRNA ligase beta subunit (Shewanella sp. (strain MR-4)).